The chain runs to 349 residues: Heme A synthase (349 aa).

The next 5 membrane-spanning stretches (helical) occupy residues 15 to 35, 101 to 121, 132 to 152, 162 to 182, and 203 to 223; these read AVQV…VVGG, LLGR…ALTG, FGLF…VASG, YRLA…VAVA, and VLVG…GLDA. His265 contributes to the heme binding site. Helical transmembrane passes span 268 to 288, 296 to 316, and 317 to 337; these read IAYL…RLGG, LVFA…VHMV, and PLDL…AAMI. Position 324 (His324) interacts with heme.

It belongs to the COX15/CtaA family. Type 2 subfamily. As to quaternary structure, interacts with CtaB. The cofactor is heme b.

It localises to the cell membrane. The enzyme catalyses Fe(II)-heme o + 2 A + H2O = Fe(II)-heme a + 2 AH2. It participates in porphyrin-containing compound metabolism; heme A biosynthesis; heme A from heme O: step 1/1. Catalyzes the conversion of heme O to heme A by two successive hydroxylations of the methyl group at C8. The first hydroxylation forms heme I, the second hydroxylation results in an unstable dihydroxymethyl group, which spontaneously dehydrates, resulting in the formyl group of heme A. This Azorhizobium caulinodans (strain ATCC 43989 / DSM 5975 / JCM 20966 / LMG 6465 / NBRC 14845 / NCIMB 13405 / ORS 571) protein is Heme A synthase.